The sequence spans 300 residues: Ornithine carbamoyltransferase (300 aa).

Carbamoyl phosphate-binding positions include 49 to 52 (STRT), glutamine 76, arginine 100, and 127 to 130 (HPCQ). L-ornithine-binding positions include asparagine 158, aspartate 218, and 222-223 (SM). Residues 258 to 259 (CL) and arginine 286 each bind carbamoyl phosphate.

This sequence belongs to the aspartate/ornithine carbamoyltransferase superfamily. OTCase family.

It is found in the cytoplasm. It carries out the reaction carbamoyl phosphate + L-ornithine = L-citrulline + phosphate + H(+). It functions in the pathway amino-acid biosynthesis; L-arginine biosynthesis; L-arginine from L-ornithine and carbamoyl phosphate: step 1/3. Functionally, reversibly catalyzes the transfer of the carbamoyl group from carbamoyl phosphate (CP) to the N(epsilon) atom of ornithine (ORN) to produce L-citrulline. The chain is Ornithine carbamoyltransferase from Nitratidesulfovibrio vulgaris (strain ATCC 29579 / DSM 644 / CCUG 34227 / NCIMB 8303 / VKM B-1760 / Hildenborough) (Desulfovibrio vulgaris).